An 88-amino-acid polypeptide reads, in one-letter code: Cuticle protein 70, isoforms A and B (88 aa).

5 repeat units span residues 7 to 10 (AAPA), 48 to 51 (AAPA), 55 to 58 (AAVP), 60 to 63 (AAPV), and 66 to 69 (AAPV).

In terms of biological role, component of the cuticle of migratory locust which contains more than 100 different structural proteins. The polypeptide is Cuticle protein 70, isoforms A and B (Locusta migratoria (Migratory locust)).